Here is a 313-residue protein sequence, read N- to C-terminus: Porphobilinogen deaminase (313 aa).

C242 is modified (S-(dipyrrolylmethanemethyl)cysteine).

Belongs to the HMBS family. As to quaternary structure, monomer. Requires dipyrromethane as cofactor.

It carries out the reaction 4 porphobilinogen + H2O = hydroxymethylbilane + 4 NH4(+). It functions in the pathway porphyrin-containing compound metabolism; protoporphyrin-IX biosynthesis; coproporphyrinogen-III from 5-aminolevulinate: step 2/4. Functionally, tetrapolymerization of the monopyrrole PBG into the hydroxymethylbilane pre-uroporphyrinogen in several discrete steps. This Pectobacterium atrosepticum (strain SCRI 1043 / ATCC BAA-672) (Erwinia carotovora subsp. atroseptica) protein is Porphobilinogen deaminase.